The following is a 244-amino-acid chain: Derlin-2.2 (244 aa).

Over 1–21 (MAQAVEEWYKQMPIITRSYLT) the chain is Cytoplasmic. Residues 22-42 (AAVITTVGCSLDIISPYNLYL) form a helical membrane-spanning segment. Residues 43 to 96 (NPTLVVKQYQYWRLVTNFLYFRKMDLDFMFHMFFLARYCKLLEENSFRGKTADF) are Lumenal-facing. The helical transmembrane segment at 97–117 (LYMLLFGASVLTGIVLIGGMI) threads the bilayer. At 118–121 (PYLS) the chain is on the cytoplasmic side. Residues 122–142 (ASFAKIIFLSNSLTFMMVYVW) form a helical membrane-spanning segment. Topologically, residues 143–152 (SKQNPYIHMS) are lumenal. Residues 153 to 173 (FLGLFTFTAAYLPWVLLGFSI) form a helical membrane-spanning segment. Over 174–244 (LVGASAWVDL…AAPFDEIHQD (71 aa)) the chain is Cytoplasmic.

It belongs to the derlin family.

It is found in the endoplasmic reticulum membrane. Its function is as follows. May be involved in the degradation process of specific misfolded endoplasmic reticulum (ER) luminal proteins. The chain is Derlin-2.2 (DER2.2) from Arabidopsis thaliana (Mouse-ear cress).